Reading from the N-terminus, the 324-residue chain is Olfactory receptor 4K15 (324 aa).

The Extracellular segment spans residues 1-25 (MNETNHSRVTEFVLLGLSSSRELQP). Asn2 and Asn5 each carry an N-linked (GlcNAc...) asparagine glycan. Residues 26-49 (FLFLTFSLLYLAILLGNFLIILTV) traverse the membrane as a helical segment. The Cytoplasmic segment spans residues 50-57 (TSDSRLHT). A helical membrane pass occupies residues 58–79 (PMYFLLANLSFIDVCVASFATP). Residues 80–100 (KMIADFLVERKTISFDACLAQ) are Extracellular-facing. Cys97 and Cys189 are oxidised to a cystine. A helical membrane pass occupies residues 101–120 (IFFVHLFTGSEMVLLVSMAY). Residues 121-139 (DRYVAICKPLHYMTVMSRR) lie on the Cytoplasmic side of the membrane. A helical transmembrane segment spans residues 140-158 (VCVVLVLISWFVGFIHTTS). Residues 159-195 (QLAFTVNLPFCGPNKVDSFFCDLPLVTKLACIDTYVV) lie on the Extracellular side of the membrane. The chain crosses the membrane as a helical span at residues 196–219 (SLLIVADSGFLSLSSFLLLVVSYT). The Cytoplasmic segment spans residues 220 to 235 (VILVTVRNRSSASMAK). A helical transmembrane segment spans residues 236–258 (ARSTLTAHITVVTLFFGPCIFIY). Residues 259-269 (VWPFSSYSVDK) are Extracellular-facing. Residues 270 to 289 (VLAVFYTIFTLILNPVIYTL) form a helical membrane-spanning segment. Residues 290–324 (RNKEVKAAMSKLKSRYLKPSQVSVVIRNVLFLETK) are Cytoplasmic-facing.

It belongs to the G-protein coupled receptor 1 family.

The protein localises to the cell membrane. Functionally, odorant receptor. This chain is Olfactory receptor 4K15 (OR4K15), found in Homo sapiens (Human).